Here is a 285-residue protein sequence, read N- to C-terminus: UPF0603 protein At1g54780, chloroplastic (285 aa).

2 disordered regions span residues 1–48 (METL…LSTR) and 228–251 (GQPDPGGPTVKDSKRESNFKTKEE). Residues 22 to 40 (HQTKPTSHSLSLSKPTTFS) are compositionally biased toward polar residues. Basic and acidic residues predominate over residues 238 to 251 (KDSKRESNFKTKEE). A helical transmembrane segment spans residues 259-279 (FSLVVGGLLVIAFVVPMAQYF).

It belongs to the UPF0603 family.

The protein localises to the plastid. It is found in the chloroplast thylakoid membrane. This Arabidopsis thaliana (Mouse-ear cress) protein is UPF0603 protein At1g54780, chloroplastic.